The chain runs to 424 residues: D-inositol 3-phosphate glycosyltransferase (424 aa).

1D-myo-inositol 3-phosphate-binding positions include histidine 9, 20–25, lysine 78, tyrosine 110, threonine 134, and arginine 154; that span reads DAGGMN. Glycine 23 provides a ligand contact to UDP-N-acetyl-alpha-D-glucosamine. UDP-N-acetyl-alpha-D-glucosamine is bound by residues arginine 231, lysine 236, and arginine 295. 3 residues coordinate Mg(2+): tyrosine 304, glutamine 305, and alanine 307. The UDP-N-acetyl-alpha-D-glucosamine site is built by glutamate 317 and glutamate 325. Threonine 331 lines the Mg(2+) pocket.

This sequence belongs to the glycosyltransferase group 1 family. MshA subfamily. Homodimer.

It catalyses the reaction 1D-myo-inositol 3-phosphate + UDP-N-acetyl-alpha-D-glucosamine = 1D-myo-inositol 2-acetamido-2-deoxy-alpha-D-glucopyranoside 3-phosphate + UDP + H(+). In terms of biological role, catalyzes the transfer of a N-acetyl-glucosamine moiety to 1D-myo-inositol 3-phosphate to produce 1D-myo-inositol 2-acetamido-2-deoxy-glucopyranoside 3-phosphate in the mycothiol biosynthesis pathway. The polypeptide is D-inositol 3-phosphate glycosyltransferase (Corynebacterium urealyticum (strain ATCC 43042 / DSM 7109)).